A 227-amino-acid polypeptide reads, in one-letter code: Small ribosomal subunit protein uS3 (227 aa).

The KH type-2 domain occupies 38–106; that stretch reads LRKYLREKLA…EVHLNIVEIR (69 aa).

This sequence belongs to the universal ribosomal protein uS3 family. In terms of assembly, part of the 30S ribosomal subunit. Forms a tight complex with proteins S10 and S14.

In terms of biological role, binds the lower part of the 30S subunit head. Binds mRNA in the 70S ribosome, positioning it for translation. This chain is Small ribosomal subunit protein uS3, found in Paramagnetospirillum magneticum (strain ATCC 700264 / AMB-1) (Magnetospirillum magneticum).